The following is a 340-amino-acid chain: Glycerol-3-phosphate dehydrogenase [NAD(P)+] (340 aa).

The NADPH site is built by Ser-11, Trp-12, Arg-32, Arg-33, and Lys-106. Sn-glycerol 3-phosphate is bound by residues Lys-106, Gly-138, and Ser-140. Residue Ala-142 participates in NADPH binding. Sn-glycerol 3-phosphate is bound by residues Lys-193, Asp-246, Ser-256, Arg-257, and Asn-258. The Proton acceptor role is filled by Lys-193. Arg-257 contributes to the NADPH binding site. NADPH contacts are provided by Val-281 and Glu-283.

This sequence belongs to the NAD-dependent glycerol-3-phosphate dehydrogenase family.

The protein localises to the cytoplasm. It catalyses the reaction sn-glycerol 3-phosphate + NAD(+) = dihydroxyacetone phosphate + NADH + H(+). It carries out the reaction sn-glycerol 3-phosphate + NADP(+) = dihydroxyacetone phosphate + NADPH + H(+). It functions in the pathway membrane lipid metabolism; glycerophospholipid metabolism. Functionally, catalyzes the reduction of the glycolytic intermediate dihydroxyacetone phosphate (DHAP) to sn-glycerol 3-phosphate (G3P), the key precursor for phospholipid synthesis. The sequence is that of Glycerol-3-phosphate dehydrogenase [NAD(P)+] from Shouchella clausii (strain KSM-K16) (Alkalihalobacillus clausii).